The primary structure comprises 633 residues: MADSLDHAPAQANNLPQFLAMTIGAIGVVYGDIGTSPLYAFREALRPFGPDGVERAEVVGLISLMLWTLTIIVTFKYVLFLLRADNDGEGGTLSLLALLMKKAPRYTTLMFMAGILGAALFIGDAMITPALSVLSAVEGLKLVTPAFHDYVLPISVGIMVLLFAVQSRGTGAVSIFFGPITLIWFLVLGAAGVAHIGDDLAILAAFNPVNAVTFLWNAGFVGFIVLGAVFLTVTGAEALYADLGHFGRGPIQAAWFAVVFPALTLNYLGQGALVLSHPEAVSDPFFLMFPNWALLPVVLLATAATIIASQAVITGAFSLVRQAINLGFLPRFEICFTSETQTGQIYLPFVNNALLAGVIVLMFMFGSSESLATAYGISVTGAMVVTTVLAFEFARHQWGWSTLTATAVLLPLLVLELFFLGANLFKIHDGGYVPILIAGTLMTTMWTWRKGVSLLREKTARQDIPLSQFMAMVERKSEHAPVEVPGTAIFLTATPDTTPAVLLHNIKHNHVLHQHNVILTIKTARVPYVPEKDRYTIEKLSDRFSLLELRFGFMDDQNVSRALARCRKEGFKFEIMSTSFYLGRRKLIAAPQSGLPQWQDKLFIAMADSAIDPTEYFHLPPNRVVELGEQVVI.

A run of 12 helical transmembrane segments spans residues 18–38 (FLAM…TSPL), 61–81 (LISL…VLFL), 109–129 (LMFM…MITP), 145–165 (PAFH…LFAV), 173–193 (VSIF…AAGV), 211–231 (AVTF…AVFL), 255–275 (WFAV…ALVL), 287–307 (LMFP…ATII), 345–365 (IYLP…MFMF), 371–391 (LATA…VLAF), 405–425 (ATAV…ANLF), and 427–447 (IHDG…TMWT).

It belongs to the HAK/KUP transporter (TC 2.A.72) family.

The protein localises to the cell inner membrane. The enzyme catalyses K(+)(in) + H(+)(in) = K(+)(out) + H(+)(out). Transport of potassium into the cell. Likely operates as a K(+):H(+) symporter. This chain is Probable potassium transport system protein Kup 2, found in Sinorhizobium medicae (strain WSM419) (Ensifer medicae).